A 455-amino-acid chain; its full sequence is Probable glycine dehydrogenase (decarboxylating) subunit 1 (455 aa).

This sequence belongs to the GcvP family. N-terminal subunit subfamily. The glycine cleavage system is composed of four proteins: P, T, L and H. In this organism, the P 'protein' is a heterodimer of two subunits.

It carries out the reaction N(6)-[(R)-lipoyl]-L-lysyl-[glycine-cleavage complex H protein] + glycine + H(+) = N(6)-[(R)-S(8)-aminomethyldihydrolipoyl]-L-lysyl-[glycine-cleavage complex H protein] + CO2. In terms of biological role, the glycine cleavage system catalyzes the degradation of glycine. The P protein binds the alpha-amino group of glycine through its pyridoxal phosphate cofactor; CO(2) is released and the remaining methylamine moiety is then transferred to the lipoamide cofactor of the H protein. This Francisella tularensis subsp. novicida (strain U112) protein is Probable glycine dehydrogenase (decarboxylating) subunit 1.